A 290-amino-acid chain; its full sequence is 3-keto-disaccharide hydrolase (290 aa).

Residues 1 to 19 (MKKVFYPLACCLAAGVLVS) form the signal peptide. Cys20 is lipidated: N-palmitoyl cysteine. Residue Cys20 is the site of S-diacylglycerol cysteine attachment.

It is found in the cell membrane. The enzyme catalyses 3-dehydro-alpha,alpha-trehalose + H2O = 3-dehydro-D-glucose + D-glucose. 3-keto-disaccharide hydrolase that preferentially hydrolyzes 3-keto-trehalose (3-dehydro-alpha,alpha-trehalose). Important for disaccharide utilization in the human gut. Also shows hydrolysis activity with the glucosinolates glucoraphanin or glucobrassicin, but with much lower efficiency. In Bacteroides thetaiotaomicron (strain ATCC 29148 / DSM 2079 / JCM 5827 / CCUG 10774 / NCTC 10582 / VPI-5482 / E50), this protein is 3-keto-disaccharide hydrolase.